We begin with the raw amino-acid sequence, 503 residues long: Probable cytochrome P450 6a19 (503 aa).

Position 445 (Cys-445) interacts with heme.

Belongs to the cytochrome P450 family. Requires heme as cofactor.

Its subcellular location is the endoplasmic reticulum membrane. It is found in the microsome membrane. Its function is as follows. May be involved in the metabolism of insect hormones and in the breakdown of synthetic insecticides. This is Probable cytochrome P450 6a19 (Cyp6a19) from Drosophila melanogaster (Fruit fly).